A 737-amino-acid chain; its full sequence is Zinc finger protein 184 (737 aa).

One can recognise a KRAB domain in the interval 28–99 (VTFKDVVVNF…DSCIPVGPLE (72 aa)). Position 117 is a phosphoserine (Ser-117). Lys-185 participates in a covalent cross-link: Glycyl lysine isopeptide (Lys-Gly) (interchain with G-Cter in SUMO2). 17 C2H2-type zinc fingers span residues 201-223 (CKCNECGKAFTYCSALIRHQRTH), 229-251 (YKCNECNKAFSRSENLINHQRIH), 257-279 (YKCDQCGKGFIEGPSLTQHQRIH), 285-307 (YKCDECGKAFSQRTHLVQHQRIH), 313-335 (YTCTECGKSFSQRGHFMEHQKIH), 341-363 (FKCEECEKTFTRSTHLTQHQKIH), 369-391 (YKCNECGKAFNGPSTFIRHHMIH), 397-419 (YECNECGKAFSQHSNLTQHQKTH), 425-447 (YDCAECGKAFSYWSSLAQHLKIH), 453-475 (YKCSDCGKAFSYCSSLTQHRRIH), 481-503 (FECSECGKAFSYLSNLNQHQKTH), 509-531 (YECKECGKAFIRSSSLAKHERIH), 537-559 (YQCHECGKTFSYGSSLIQHKKIH), 565-587 (YKCNECGRAFNQKIHLTQHKRIH), 593-615 (YACPKCGKTFRHCSSLAQHQKTH), 621-643 (YQCNKCEKTFSQNSRLTQHQRIH), and 649-671 (YKCSECDKCFTGSVHLTEHRSTH). The C2H2-type 18; degenerate zinc-finger motif lies at 677–698 (YNSECPQTFSQSTYLTQHQKIH). The C2H2-type 19 zinc-finger motif lies at 704-726 (LGCEDCEKAFQCHSALTKHQRLH).

The protein belongs to the krueppel C2H2-type zinc-finger protein family.

It localises to the nucleus. Functionally, may be involved in transcriptional regulation. The protein is Zinc finger protein 184 (Zfp184) of Mus musculus (Mouse).